Here is a 655-residue protein sequence, read N- to C-terminus: p-hydroxybenzoic acid efflux pump subunit AaeB (655 aa).

A run of 11 helical transmembrane segments spans residues 13 to 33 (FAVKLASAIVLALFVGFHFQL), 38 to 58 (WAVLTAAIVAAGPAFAAGGEP), 69 to 89 (LRIIGTFIGCIAALTIIILMI), 93 to 113 (LLMVLVCCIWAGFCTWLSSLV), 121 to 141 (WGLAGYTALIIVITIQTEPLL), 152 to 172 (EIVIGIVCAIVADLLFSPRSI), 370 to 390 (LFWLWTGWTSGSGAMVMIAVV), 407 to 427 (FLYGTIAALPLGALYFLVILP), 431 to 451 (QSMLLLCISLAVMAFFIGIEV), 459 to 479 (LGALASTINILVLDNPMTFHF), and 482 to 502 (FLDSALGQLVGCFLAMMVILL).

This sequence belongs to the aromatic acid exporter ArAE (TC 2.A.85) family.

The protein localises to the cell inner membrane. Functionally, forms an efflux pump with AaeA. Could function as a metabolic relief valve, allowing to eliminate certain compounds when they accumulate to high levels in the cell. The polypeptide is p-hydroxybenzoic acid efflux pump subunit AaeB (Enterobacter cloacae subsp. cloacae (strain ATCC 13047 / DSM 30054 / NBRC 13535 / NCTC 10005 / WDCM 00083 / NCDC 279-56)).